The sequence spans 614 residues: 1-deoxy-D-xylulose-5-phosphate synthase (614 aa).

Thiamine diphosphate contacts are provided by residues His74 and 115–117 (AHS). Asp146 serves as a coordination point for Mg(2+). Residues 147–148 (GA), Asn175, Tyr282, and Glu363 each bind thiamine diphosphate. Residue Asn175 participates in Mg(2+) binding.

Belongs to the transketolase family. DXPS subfamily. Homodimer. The cofactor is Mg(2+). Thiamine diphosphate is required as a cofactor.

The catalysed reaction is D-glyceraldehyde 3-phosphate + pyruvate + H(+) = 1-deoxy-D-xylulose 5-phosphate + CO2. It functions in the pathway metabolic intermediate biosynthesis; 1-deoxy-D-xylulose 5-phosphate biosynthesis; 1-deoxy-D-xylulose 5-phosphate from D-glyceraldehyde 3-phosphate and pyruvate: step 1/1. Functionally, catalyzes the acyloin condensation reaction between C atoms 2 and 3 of pyruvate and glyceraldehyde 3-phosphate to yield 1-deoxy-D-xylulose-5-phosphate (DXP). The sequence is that of 1-deoxy-D-xylulose-5-phosphate synthase from Nitrosomonas eutropha (strain DSM 101675 / C91 / Nm57).